We begin with the raw amino-acid sequence, 121 residues long: Insertion element IS406 uncharacterized 13.3 kDa protein (121 aa).

The sequence is that of Insertion element IS406 uncharacterized 13.3 kDa protein from Burkholderia multivorans (strain ATCC 17616 / 249).